A 203-amino-acid polypeptide reads, in one-letter code: Dual specificity phosphatase 29 (203 aa).

The Tyrosine-protein phosphatase domain maps to 47 to 193 (HVNQVWPRIY…LRALDIALQE (147 aa)). 137–144 (HCVMGRSR) provides a ligand contact to substrate. The Phosphocysteine intermediate role is filled by C138.

The protein belongs to the protein-tyrosine phosphatase family. Non-receptor class dual specificity subfamily.

It localises to the cytoplasm. Its subcellular location is the nucleus. It catalyses the reaction O-phospho-L-tyrosyl-[protein] + H2O = L-tyrosyl-[protein] + phosphate. It carries out the reaction O-phospho-L-seryl-[protein] + H2O = L-seryl-[protein] + phosphate. The enzyme catalyses O-phospho-L-threonyl-[protein] + H2O = L-threonyl-[protein] + phosphate. Functionally, dual specificity phosphatase able to dephosphorylate phosphotyrosine, phosphoserine and phosphothreonine residues within the same substrate, with a preference for phosphotyrosine as a substrate. Involved in the modulation of AMPK and MAPK1/2 signaling pathways. The protein is Dual specificity phosphatase 29 (dusp29) of Oryzias latipes (Japanese rice fish).